We begin with the raw amino-acid sequence, 1460 residues long: ABC transporter C family member 5 (1460 aa).

Disordered stretches follow at residues Met-1–Glu-23 and Gly-37–Asn-68. Residues Gly-37–Ser-55 show a composition bias toward low complexity. The next 5 helical transmembrane spans lie at Phe-196–Phe-216, Leu-238–Tyr-258, Leu-320–Trp-340, Leu-425–Tyr-445, and Ile-456–Gly-476. An ABC transmembrane type-1 1 domain is found at Phe-196–Gln-482. Residues Ile-537–Lys-567 are disordered. The segment covering Ser-551–Asn-563 has biased composition (polar residues). The region spanning Asn-560–Leu-783 is the ABC transporter 1 domain. Gly-593–Ser-600 provides a ligand contact to ATP. Helical transmembrane passes span Met-842–Ile-862, Ala-922–Val-942, Ile-1014–Ile-1034, and Trp-1108–Ile-1128. Residues Phe-853–Thr-1166 form the ABC transmembrane type-1 2 domain. Residues Ile-1210–Asp-1444 form the ABC transporter 2 domain. Gly-1244–Ser-1251 contacts ATP.

The protein belongs to the ABC transporter superfamily. ABCC family. Conjugate transporter (TC 3.A.1.208) subfamily.

It localises to the membrane. This chain is ABC transporter C family member 5 (abcC5), found in Dictyostelium discoideum (Social amoeba).